Consider the following 489-residue polypeptide: Betaine aldehyde dehydrogenase (489 aa).

Positions 26 and 93 each coordinate K(+). NAD(+) is bound at residue 150 to 152 (GAW). Lysine 162 functions as the Charge relay system in the catalytic mechanism. Position 176–179 (176–179 (KPSE)) interacts with NAD(+). Valine 180 provides a ligand contact to K(+). Residue 229–232 (GVET) coordinates NAD(+). Leucine 245 is a K(+) binding site. Residue glutamate 251 is the Proton acceptor of the active site. Glycine 253, cysteine 285, and glutamate 386 together coordinate NAD(+). Cysteine 285 (nucleophile) is an active-site residue. Cysteine 285 is subject to Cysteine sulfenic acid (-SOH). K(+)-binding residues include lysine 456 and glycine 459. Residue glutamate 463 is the Charge relay system of the active site.

Belongs to the aldehyde dehydrogenase family. As to quaternary structure, dimer of dimers. The cofactor is K(+).

The enzyme catalyses betaine aldehyde + NAD(+) + H2O = glycine betaine + NADH + 2 H(+). It participates in amine and polyamine biosynthesis; betaine biosynthesis via choline pathway; betaine from betaine aldehyde: step 1/1. In terms of biological role, involved in the biosynthesis of the osmoprotectant glycine betaine. Catalyzes the irreversible oxidation of betaine aldehyde to the corresponding acid. In Burkholderia pseudomallei (strain 668), this protein is Betaine aldehyde dehydrogenase.